The following is a 54-amino-acid chain: Ovomucoid (54 aa).

Residues 4–54 enclose the Kazal-like domain; that stretch reads VDCSDYPKPACLLEYMPLCGSDNKTYDNKCSFCNAVVDSNGTLSLSHFGKC. Intrachain disulfides connect Cys6/Cys36, Cys14/Cys33, and Cys22/Cys54. Residue Asn43 is glycosylated (N-linked (GlcNAc...) asparagine).

The protein localises to the secreted. The polypeptide is Ovomucoid (Opisthocomus hoazin (Hoatzin)).